The sequence spans 158 residues: Troponin C, isoform 1 (158 aa).

Residue Ser-1 is modified to N-acetylserine. 4 consecutive EF-hand domains span residues 15 to 50 (EQIVVLRRAFDSFDRDKKGYISPETVSDILRMMGIK), 51 to 86 (VSSTSFKQIIEEIDEDGSGQIEFSEFLQLAAKFLIE), 91 to 126 (AMMKELKEAFRLYDKEGNGYITTQTLKEILHELDAR), and 127 to 158 (LTAEELVGIIEEIDEDGSGTVDFDEFMAMMTG). Asp-64, Asp-66, Ser-68, Gln-70, and Glu-75 together coordinate Ca(2+). 5 residues coordinate Ca(2+): Asp-140, Asp-142, Ser-144, Thr-146, and Glu-151.

Belongs to the troponin C family.

Its function is as follows. Troponin is the central regulatory protein of striated muscle contraction. Tn consists of three components: Tn-I which is the inhibitor of actomyosin ATPase, Tn-T which contains the binding site for tropomyosin and Tn-C. The binding of calcium to Tn-C abolishes the inhibitory action of Tn on actin filaments. The sequence is that of Troponin C, isoform 1 from Balanus nubilus (Giant acorn barnacle).